The following is a 270-amino-acid chain: 4-hydroxy-tetrahydrodipicolinate reductase (270 aa).

NAD(+) is bound by residues 11 to 16 (GAGGRM) and Glu-37. Arg-38 serves as a coordination point for NADP(+). NAD(+) is bound by residues 101–103 (GTT) and 125–128 (APNM). The active-site Proton donor/acceptor is the His-158. His-159 is a (S)-2,3,4,5-tetrahydrodipicolinate binding site. Residue Lys-162 is the Proton donor of the active site. (S)-2,3,4,5-tetrahydrodipicolinate is bound at residue 168 to 169 (GT).

It belongs to the DapB family.

The protein localises to the cytoplasm. It catalyses the reaction (S)-2,3,4,5-tetrahydrodipicolinate + NAD(+) + H2O = (2S,4S)-4-hydroxy-2,3,4,5-tetrahydrodipicolinate + NADH + H(+). The catalysed reaction is (S)-2,3,4,5-tetrahydrodipicolinate + NADP(+) + H2O = (2S,4S)-4-hydroxy-2,3,4,5-tetrahydrodipicolinate + NADPH + H(+). Its pathway is amino-acid biosynthesis; L-lysine biosynthesis via DAP pathway; (S)-tetrahydrodipicolinate from L-aspartate: step 4/4. Functionally, catalyzes the conversion of 4-hydroxy-tetrahydrodipicolinate (HTPA) to tetrahydrodipicolinate. This chain is 4-hydroxy-tetrahydrodipicolinate reductase, found in Shewanella putrefaciens (strain CN-32 / ATCC BAA-453).